The chain runs to 504 residues: Sensor protein FixL (504 aa).

The disordered stretch occupies residues 1–21 (MTDTPTQALPPKAPQAGPTVP). Residues 1–50 (MTDTPTQALPPKAPQAGPTVPGTVRRAVPGSAAAALVIAASHFAALSAFD) are Cytoplasmic-facing. The helical transmembrane segment at 51-71 (PRILLVLLVIVVLASSGGLFA) threads the bilayer. Residues 72–99 (GLAATAVSALGLALRGLLSGDTVVADWQ) lie on the Periplasmic side of the membrane. Residues 100–118 (SLGLLTIAGAGIAVLGERL) form a helical membrane-spanning segment. Residues 119-504 (RRTRLDAVAR…TVDEEAMNDA (386 aa)) are Cytoplasmic-facing. The PAS domain maps to 135-202 (REAHLSSILD…QHDLYLSRYL (68 aa)). Residues 203–262 (TTGERRIIGIGRVVTGERKDGATFPMELAVGEMHSVSGRFFTGFIRDLTERQNTEARLQE) enclose the PAC domain. A Histidine kinase domain is found at 282–497 (TLAHELNQPL…IFRFTLRTVD (216 aa)). His-285 is modified (phosphohistidine; by autocatalysis).

Heme is required as a cofactor.

Its subcellular location is the cell inner membrane. It carries out the reaction ATP + protein L-histidine = ADP + protein N-phospho-L-histidine.. Its activity is regulated as follows. The heme moiety regulates the kinase activity. Its function is as follows. Putative oxygen sensor; modulates the activity of FixJ, a transcriptional activator of nitrogen fixation fixK gene. FixL probably acts as a kinase that phosphorylates FixJ. The chain is Sensor protein FixL (fixL) from Azorhizobium caulinodans (strain ATCC 43989 / DSM 5975 / JCM 20966 / LMG 6465 / NBRC 14845 / NCIMB 13405 / ORS 571).